An 88-amino-acid chain; its full sequence is Mitochondrial import inner membrane translocase subunit Tim10 (88 aa).

Positions 25 to 49 (CSAKCISKYNEGDLNVGESVCAERC) match the Twin CX3C motif motif. 2 disulfides stabilise this stretch: Cys-25–Cys-49 and Cys-29–Cys-45. Residues 63–88 (KMSGTQPGQEVPQEAPAAAPEKKGWF) form a disordered region. The span at 68-81 (QPGQEVPQEAPAAA) shows a compositional bias: low complexity.

This sequence belongs to the small Tim family. In terms of assembly, heterohexamer; composed of 3 copies of timm9 and 3 copies of timm10, named soluble 70 kDa complex. Associates directly with the TIM22 complex, whose core is composed of timm22. Interacts with the transmembrane regions of multi-pass transmembrane proteins in transit.

Its subcellular location is the mitochondrion inner membrane. Functionally, component of the TIM22 complex, a complex that mediates the import and insertion of multi-pass transmembrane proteins into the mitochondrial inner membrane. The TIM22 complex forms a twin-pore translocase that uses the membrane potential as external driving force. This Dictyostelium discoideum (Social amoeba) protein is Mitochondrial import inner membrane translocase subunit Tim10 (timm10).